The following is a 100-amino-acid chain: Vesicle-associated membrane protein 8 (100 aa).

The Cytoplasmic segment spans residues 1–74; sequence MEASGSAGND…ARKFWWKNVK (74 aa). Ser4 and Ser17 each carry phosphoserine. The v-SNARE coiled-coil homology domain occupies 11-71; that stretch reads RVRNLQSEVE…QKVARKFWWK (61 aa). Phosphothreonine occurs at positions 27, 47, and 53. Phosphoserine is present on Ser54. A helical; Anchor for type IV membrane protein transmembrane segment spans residues 75–95; the sequence is MIVIICVIVLIILILIILFAT. The Vesicular segment spans residues 96-100; it reads GTIPT.

It belongs to the synaptobrevin family. Forms a SNARE complex composed of VAMP8, SNAP29 and STX17 involved in fusion of autophagosome with lysosome. Found in a number of SNARE complexes with NAPA, SNAP23, SNAP25, STX1A, STX4, STX7, STX8 and VTI1B. Interacts with PICALM. SNARE complex formation and binding by PICALM are mutually exclusive processes for VAMP8. Interacts with SBF2/MTMR13. Interacts with RAB21 (in GTP-bound form) in response to starvation; the interaction probably regulates VAMP8 endolysosomal trafficking. Interacts with STX17; this interaction is increased in the absence of TMEM39A. Interacts with TRIM6. In terms of tissue distribution, expressed (at protein level) at a high level in kidney, lung and spleen; at a lower level in testis, liver, brain and heart. Expressed in kidney and retinal pigment epithelium derived cell line.

It localises to the lysosome membrane. The protein localises to the late endosome membrane. The protein resides in the early endosome membrane. Its subcellular location is the midbody. It is found in the cell membrane. It localises to the zymogen granule membrane. In terms of biological role, SNAREs, soluble N-ethylmaleimide-sensitive factor-attachment protein receptors, are essential proteins for fusion of cellular membranes. SNAREs localized on opposing membranes assemble to form a trans-SNARE complex, an extended, parallel four alpha-helical bundle that drives membrane fusion. VAMP8 is a SNARE involved in autophagy through the direct control of autophagosome membrane fusion with the lysososome membrane via its interaction with the STX17-SNAP29 binary t-SNARE complex. Also required for dense-granule secretion in platelets. Also plays a role in regulated enzyme secretion in pancreatic acinar cells. Involved in the abscission of the midbody during cell division, which leads to completely separate daughter cells. Involved in the homotypic fusion of early and late endosomes. Also participates in the activation of type I interferon antiviral response through a TRIM6-dependent mechanism. This is Vesicle-associated membrane protein 8 from Rattus norvegicus (Rat).